Reading from the N-terminus, the 260-residue chain is Phosphate import ATP-binding protein PstB 5 (260 aa).

One can recognise an ABC transporter domain in the interval 9–255 (IKVKDLSFYY…PLDSRTRDYV (247 aa)). Position 41–48 (41–48 (GPSGCGKS)) interacts with ATP.

It belongs to the ABC transporter superfamily. Phosphate importer (TC 3.A.1.7) family. In terms of assembly, the complex is composed of two ATP-binding proteins (PstB), two transmembrane proteins (PstC and PstA) and a solute-binding protein (PstS).

It is found in the cell inner membrane. The enzyme catalyses phosphate(out) + ATP + H2O = ADP + 2 phosphate(in) + H(+). Its function is as follows. Part of the ABC transporter complex PstSACB involved in phosphate import. Responsible for energy coupling to the transport system. The sequence is that of Phosphate import ATP-binding protein PstB 5 from Trichormus variabilis (strain ATCC 29413 / PCC 7937) (Anabaena variabilis).